A 408-amino-acid chain; its full sequence is Probable pectate lyase 18 (408 aa).

Positions 1-24 (MKMQTKKLFITIVSFLLYAPLFLS) are cleaved as a signal peptide. An N-linked (GlcNAc...) asparagine glycan is attached at asparagine 42. Aspartate 206, aspartate 230, and aspartate 234 together coordinate Ca(2+). Residue arginine 286 is part of the active site.

Belongs to the polysaccharide lyase 1 family. It depends on Ca(2+) as a cofactor. In terms of tissue distribution, expressed in flowers, but not in leaves.

The enzyme catalyses Eliminative cleavage of (1-&gt;4)-alpha-D-galacturonan to give oligosaccharides with 4-deoxy-alpha-D-galact-4-enuronosyl groups at their non-reducing ends.. It participates in glycan metabolism; pectin degradation; 2-dehydro-3-deoxy-D-gluconate from pectin: step 2/5. This is Probable pectate lyase 18 from Arabidopsis thaliana (Mouse-ear cress).